A 326-amino-acid chain; its full sequence is Beta-ketoacyl-[acyl-carrier-protein] synthase III (326 aa).

Active-site residues include cysteine 111 and histidine 253. Positions 254-258 (QANSR) are ACP-binding. Residue asparagine 283 is part of the active site.

Belongs to the thiolase-like superfamily. FabH family. In terms of assembly, homodimer.

The protein localises to the cytoplasm. The enzyme catalyses malonyl-[ACP] + acetyl-CoA + H(+) = 3-oxobutanoyl-[ACP] + CO2 + CoA. Its pathway is lipid metabolism; fatty acid biosynthesis. Catalyzes the condensation reaction of fatty acid synthesis by the addition to an acyl acceptor of two carbons from malonyl-ACP. Catalyzes the first condensation reaction which initiates fatty acid synthesis and may therefore play a role in governing the total rate of fatty acid production. Possesses both acetoacetyl-ACP synthase and acetyl transacylase activities. Its substrate specificity determines the biosynthesis of branched-chain and/or straight-chain of fatty acids. The chain is Beta-ketoacyl-[acyl-carrier-protein] synthase III from Latilactobacillus sakei subsp. sakei (strain 23K) (Lactobacillus sakei subsp. sakei).